We begin with the raw amino-acid sequence, 493 residues long: Alcohol-forming fatty acyl-CoA reductase (493 aa).

The protein belongs to the fatty acyl-CoA reductase family.

The catalysed reaction is a long-chain fatty acyl-CoA + 2 NADPH + 2 H(+) = a long-chain primary fatty alcohol + 2 NADP(+) + CoA. Functionally, NADPH-dependent alcohol-forming fatty acyl-coenzyme A reductase that catalyzes the reduction of fatty acyl-CoA to fatty alcohols. The recombinant enzyme accepts saturated and mono-unsaturated fatty acyl-CoAs of 16 to 22 carbons. In Simmondsia chinensis (Jojoba), this protein is Alcohol-forming fatty acyl-CoA reductase.